We begin with the raw amino-acid sequence, 378 residues long: Chitinase (378 aa).

The first 28 residues, 1 to 28 (MNFTVKYSFLVICLLCCLLSTYVSVIEG), serve as a signal peptide directing secretion. A GH18 domain is found at 53–378 (GIIQGYYPSW…AIEYFVESLH (326 aa)). The active-site Proton donor is the E174. A disulfide bridge links C220 with C230.

This sequence belongs to the glycosyl hydrolase 18 family. Forms a hetero-multimeric, high molecular weight complex composed of at least CHT1, SOAP AND WARP. Within the complex, may interact with WARP via a disulfide bond.

Its subcellular location is the secreted. It is found in the cytoplasmic vesicle. The protein localises to the secretory vesicle. It localises to the microneme. It catalyses the reaction Random endo-hydrolysis of N-acetyl-beta-D-glucosaminide (1-&gt;4)-beta-linkages in chitin and chitodextrins.. Its activity is regulated as follows. Inhibited by allosamidin. In terms of biological role, endochitinase that cleaves beta-1,4-linkages between tri- and tetramers of N-acetylglucosamine (GlcNAc) from penta- and hexameric chitin oligomers. Does not cleave smaller chitin oligosaccharides. Required to cross the acellular, chitin-containing peritrophic matrix (PM) which is formed around the ingested blood meal in the mosquito midgut allowing the ookinete to invade the mosquito gut epithelium. The sequence is that of Chitinase from Plasmodium falciparum (isolate 3D7).